We begin with the raw amino-acid sequence, 859 residues long: Envelope glycoprotein (859 aa).

Residues 1-6 constitute a propeptide that is removed on maturation; the sequence is MVSIAF. Topologically, residues 7-614 are extracellular; it reads YGGIPGGIST…KDLWSHIGNW (608 aa). 14 N-linked (GlcNAc...) asparagine; by host glycosylation sites follow: asparagine 40, asparagine 112, asparagine 141, asparagine 148, asparagine 186, asparagine 214, asparagine 233, asparagine 244, asparagine 340, asparagine 368, asparagine 399, asparagine 406, asparagine 411, and asparagine 422. The segment at 446–466 is fusion peptide; sequence FGISAIVAAIVAATAIARSAT. Residues asparagine 483 and asparagine 490 are each glycosylated (N-linked (GlcNAc...) asparagine; by host). Residues 498-513 form an immunosuppression region; the sequence is LIERQIKILYAMILQT. Asparagine 550 and asparagine 557 each carry an N-linked (GlcNAc...) asparagine; by host glycan. Coiled coils occupy residues 576–624 and 663–699; these read ILTT…SIIK and KKFH…YYKQ. The chain crosses the membrane as a helical span at residues 615 to 635; sequence IPGLGASIIKYIVMFLLIYLL. The Cytoplasmic portion of the chain corresponds to 636-859; the sequence is LTSSPKILRA…TSHVSMPQYV (224 aa).

In terms of assembly, the mature envelope protein (Env) consists of a trimer of SU-TM heterodimers attached by noncovalent interactions or by a labile interchain disulfide bond. Post-translationally, specific enzymatic cleavages in vivo yield mature proteins. Envelope glycoproteins are synthesized as an inactive precursor that is N-glycosylated and processed likely by host cell furin or by a furin-like protease in the Golgi to yield the mature SU and TM proteins. The cleavage site between SU and TM requires the minimal sequence [KR]-X-[KR]-R.

It localises to the virion membrane. The protein resides in the host cell membrane. Its function is as follows. The surface protein (SU) attaches the virus to the host cell by binding to its receptor. This interaction triggers the refolding of the transmembrane protein (TM) and is thought to activate its fusogenic potential by unmasking its fusion peptide. Fusion occurs at the host cell plasma membrane. In terms of biological role, the transmembrane protein (TM) acts as a class I viral fusion protein. Under the current model, the protein has at least 3 conformational states: pre-fusion native state, pre-hairpin intermediate state, and post-fusion hairpin state. During viral and target cell membrane fusion, the coiled coil regions (heptad repeats) assume a trimer-of-hairpins structure, positioning the fusion peptide in close proximity to the C-terminal region of the ectodomain. The formation of this structure appears to drive apposition and subsequent fusion of viral and target cell membranes. Membranes fusion leads to delivery of the nucleocapsid into the cytoplasm. This chain is Envelope glycoprotein (env), found in Equus asinus (Donkey).